We begin with the raw amino-acid sequence, 130 residues long: Large ribosomal subunit protein bL17 (130 aa).

Belongs to the bacterial ribosomal protein bL17 family. As to quaternary structure, part of the 50S ribosomal subunit. Contacts protein L32.

In Pectobacterium atrosepticum (strain SCRI 1043 / ATCC BAA-672) (Erwinia carotovora subsp. atroseptica), this protein is Large ribosomal subunit protein bL17.